Reading from the N-terminus, the 518-residue chain is Phenylacetate 2-hydroxylase (518 aa).

Cys437 is a heme binding site.

This sequence belongs to the cytochrome P450 family.

It catalyses the reaction 2-phenylacetate + reduced [NADPH--hemoprotein reductase] + O2 = (2-hydroxyphenyl)acetate + oxidized [NADPH--hemoprotein reductase] + H2O + H(+). The protein operates within aromatic compound metabolism; phenylacetate degradation. In terms of biological role, catalyzes the hydroxylation of phenylacetate to 2-hydroxyphenylacetate in the homogentisate pathway. The homogentisate pathway is used to catabolize phenylacetate and use it as a carbon source. Can also catalyze the hydroxylation of 3-hydroxyphenylacetate to 2,5-dihydroxyphenylacetate (homogentisate) at low efficiency. The chain is Phenylacetate 2-hydroxylase (phacA) from Emericella nidulans (Aspergillus nidulans).